Here is a 463-residue protein sequence, read N- to C-terminus: V-type proton ATPase subunit S1 (463 aa).

The first 32 residues, 1-32, serve as a signal peptide directing secretion; it reads MMAATVVSRIRTGTRWAPVLWLLLSLVAVAAA. Positions 33 to 225 are excised as a propeptide; the sequence is VAAEQQVPLV…TAVRPSRVAR (193 aa). Residues 33–412 are Lumenal-facing; the sequence is VAAEQQVPLV…EQFSYASDCA (380 aa). N-linked (GlcNAc...) asparagine glycans are attached at residues N164, N255, N267, N290, N297, N344, N351, and N399. The chain crosses the membrane as a helical span at residues 413-433; sequence GFFSPGIWMGLLTTLFMLFIF. At 434–463 the chain is on the cytoplasmic side; sequence TYGLHMILSLKTMDRFDDRKGPTITLTQIV.

Belongs to the vacuolar ATPase subunit S1 family. As to quaternary structure, accessory component of the multisubunit proton-transporting vacuolar (V)-ATPase protein pump. Interacts (via N-terminus) with ATP6AP2 (via N-terminus). Interacts with RNASEK. Interacts with TMEM106B (via C-terminus). N-glycosylated. Expressed in brain (at protein level).

The protein resides in the endoplasmic reticulum membrane. It localises to the endoplasmic reticulum-Golgi intermediate compartment membrane. The protein localises to the cytoplasmic vesicle. Its subcellular location is the secretory vesicle. It is found in the synaptic vesicle membrane. The protein resides in the clathrin-coated vesicle membrane. Functionally, accessory subunit of the proton-transporting vacuolar (V)-ATPase protein pump, which is required for luminal acidification of secretory vesicles. Guides the V-type ATPase into specialized subcellular compartments, such as neuroendocrine regulated secretory vesicles or the ruffled border of the osteoclast, thereby regulating its activity. Involved in membrane trafficking and Ca(2+)-dependent membrane fusion. May play a role in the assembly of the V-type ATPase complex. In aerobic conditions, involved in intracellular iron homeostasis, thus triggering the activity of Fe(2+) prolyl hydroxylase (PHD) enzymes, and leading to HIF1A hydroxylation and subsequent proteasomal degradation. In islets of Langerhans cells, may regulate the acidification of dense-core secretory granules. The polypeptide is V-type proton ATPase subunit S1 (Atp6ap1) (Rattus norvegicus (Rat)).